A 235-amino-acid chain; its full sequence is Transmembrane emp24 domain-containing protein 9 (235 aa).

A signal peptide spans 1–37 (MAAVRGVRVVGTSPGLLLGRGMRAFLLLLCLAARGGA). Residues 38–202 (LYFHIGETEK…RQTSESTNQR (165 aa)) are Lumenal-facing. One can recognise a GOLD domain in the interval 47–145 (KKCFIEEIPD…MLRVHLDIQV (99 aa)). The tract at residues 121–160 (CLHSNSTKFSLFAGGMLRVHLDIQVGEHANDYAEIAAKDK) is required for interaction with STX17. Residue asparagine 125 is glycosylated (N-linked (GlcNAc...) asparagine). The stretch at 154–184 (EIAAKDKLSELQLRVRQLVEQVEQIQKEQNY) forms a coiled coil. The residue at position 160 (lysine 160) is an N6-acetyllysine. Residues 203 to 222 (VLWWSILQTLILVAIGVWQM) traverse the membrane as a helical segment. Residues 223–235 (RHLKSFFEAKKLV) are Cytoplasmic-facing. The short motif at 228 to 229 (FF) is the COPII vesicle coat-binding element. The short motif at 228–235 (FFEAKKLV) is the COPI vesicle coat-binding element.

The protein belongs to the EMP24/GP25L family. As to quaternary structure, monomer and homodimer in endoplasmic reticulum. Predominantly monomeric and to lesser extent homodimeric in endoplasmic reticulum-Golgi intermediate compartment and cis-Golgi network. Probably oligomerizes with other members of the EMP24/GP25L family such as TMED2, TMED7 and TMED10. Interacts with TMED5. Interacts (via C-terminus) with COPG1; the interaction involves dimeric TMED9. Interacts with PTPN2 and SPAST. Interacts with STX17; the interaction is direct. Post-translationally, N-linked glycosylated containing high mannose.

The protein resides in the endoplasmic reticulum membrane. The protein localises to the golgi apparatus. It is found in the cis-Golgi network membrane. It localises to the endoplasmic reticulum-Golgi intermediate compartment membrane. Its subcellular location is the trans-Golgi network membrane. Its function is as follows. Appears to be involved in vesicular protein trafficking, mainly in the early secretory pathway. In COPI vesicle-mediated retrograde transport involved in the coatomer recruitment to membranes of the early secretory pathway. Increases coatomer-dependent activity of ARFGAP2. Thought to play a crucial role in the specific retention of p24 complexes in cis-Golgi membranes; specifically contributes to the coupled localization of TMED2 and TMED10 in the cis-Golgi network. May be involved in organization of intracellular membranes, such as of the ER-Golgi intermediate compartment and the Golgi apparatus. Involved in ER localization of PTPN2. This is Transmembrane emp24 domain-containing protein 9 (Tmed9) from Rattus norvegicus (Rat).